We begin with the raw amino-acid sequence, 670 residues long: Transcription factor Ken 2 (670 aa).

The 69-residue stretch at 108–176 (TDLLLICDGK…LYSGQVYVRS (69 aa)) folds into the BTB domain. Disordered stretches follow at residues 200–288 (SDGS…DRDR) and 307–470 (NNHP…SDDA). Over residues 218–230 (NRNTEGITGSSVV) the composition is skewed to polar residues. The span at 325–338 (HHLHHHHHHHHRQL) shows a compositional bias: basic residues. Composition is skewed to gly residues over residues 351-368 (GGGS…GESG) and 389-400 (SGGGGAGSGRRS). Positions 407 to 419 (EPAEDDEDYELDV) are enriched in acidic residues. Residues 451-464 (SDPVNLSIVKQQQD) are compositionally biased toward polar residues. The C2H2-type 1; degenerate zinc finger occupies 586–594 (NLKTHLRVH). 2 consecutive C2H2-type zinc fingers follow at residues 600 to 623 (FACR…CSVH) and 636 to 658 (YTCC…LSGH).

Its subcellular location is the nucleus. Its function is as follows. Transcription factor required for terminalia development. Negative regulator of the JAK/STAT pathway: represses JAK/STAT-dependent expression of ventral veins lacking (vvl) in the posterior spiracles. The protein is Transcription factor Ken 2 of Culex quinquefasciatus (Southern house mosquito).